Reading from the N-terminus, the 406-residue chain is Tyrosine--tRNA ligase (406 aa).

Residue Y35 participates in L-tyrosine binding. Residues 40–49 (PTADSLHVGH) carry the 'HIGH' region motif. Residues Y168 and Q172 each coordinate L-tyrosine. The short motif at 228–232 (KMGKT) is the 'KMSKS' region element. K231 serves as a coordination point for ATP. The region spanning 340-404 (SELLDILVEA…RGKKNYNKIV (65 aa)) is the S4 RNA-binding domain.

Belongs to the class-I aminoacyl-tRNA synthetase family. TyrS type 1 subfamily. Homodimer.

The protein localises to the cytoplasm. It catalyses the reaction tRNA(Tyr) + L-tyrosine + ATP = L-tyrosyl-tRNA(Tyr) + AMP + diphosphate + H(+). Functionally, catalyzes the attachment of tyrosine to tRNA(Tyr) in a two-step reaction: tyrosine is first activated by ATP to form Tyr-AMP and then transferred to the acceptor end of tRNA(Tyr). This Clostridium perfringens (strain SM101 / Type A) protein is Tyrosine--tRNA ligase.